The chain runs to 298 residues: Acetylglutamate kinase (298 aa).

Substrate-binding positions include 68–69 (GG), R90, and N195.

It belongs to the acetylglutamate kinase family. ArgB subfamily.

Its subcellular location is the cytoplasm. The catalysed reaction is N-acetyl-L-glutamate + ATP = N-acetyl-L-glutamyl 5-phosphate + ADP. It participates in amino-acid biosynthesis; L-arginine biosynthesis; N(2)-acetyl-L-ornithine from L-glutamate: step 2/4. Catalyzes the ATP-dependent phosphorylation of N-acetyl-L-glutamate. The chain is Acetylglutamate kinase from Hydrogenovibrio crunogenus (strain DSM 25203 / XCL-2) (Thiomicrospira crunogena).